Consider the following 396-residue polypeptide: MAEKEHYVRTKPHVNIGTIGHVDHGKTTLTAAITTVLAKKGLAQAEDYSQIDAAPEEKERGITINTAHVEYETEKRHYAHMDAPGHADYIKNMITGAAQMDGAILVVAATDGPMPQTREHILLARQVGVNSIVVFLNKCDLVDDPELIDLVEMEVRDLLSEYGYPGDDVPVVRGSALKALEGDEEAQKKIEELMDVVDEYIPTPERETDKPFLMPVEDVFTITGRGTVASGRIDRGTVKVGDSVEIVGLVEKVLTSVVTGLEMFHKTLDLGEAGDNVGVLLRGVDRDQIVRGQVLAAPGSIKTHKTFKGQVYILSKDEGGRHTPFFSDYRPQFYFHTTDITGEIELPEGTEMVMPGDNTEFSVTLIKPAAIEVGTKFTIREGGRTVGAGQVTEIDD.

Residues 11–205 form the tr-type G domain; sequence KPHVNIGTIG…VVDEYIPTPE (195 aa). Residues 20 to 27 form a G1 region; that stretch reads GHVDHGKT. 20–27 lines the GTP pocket; sequence GHVDHGKT. Mg(2+) is bound at residue Thr27. Residues 61–65 form a G2 region; the sequence is GITIN. The segment at 82–85 is G3; the sequence is DAPG. Residues 82–86 and 137–140 each bind GTP; these read DAPGH and NKCD. The segment at 137–140 is G4; that stretch reads NKCD. Positions 175-177 are G5; sequence SAL.

The protein belongs to the TRAFAC class translation factor GTPase superfamily. Classic translation factor GTPase family. EF-Tu/EF-1A subfamily. Monomer.

The protein localises to the cytoplasm. The enzyme catalyses GTP + H2O = GDP + phosphate + H(+). Its function is as follows. GTP hydrolase that promotes the GTP-dependent binding of aminoacyl-tRNA to the A-site of ribosomes during protein biosynthesis. In Lactobacillus delbrueckii subsp. bulgaricus (strain ATCC 11842 / DSM 20081 / BCRC 10696 / JCM 1002 / NBRC 13953 / NCIMB 11778 / NCTC 12712 / WDCM 00102 / Lb 14), this protein is Elongation factor Tu.